The sequence spans 382 residues: uncharacterized protein (382 aa).

Helical transmembrane passes span 8–28 (VMLL…LNTL), 45–65 (MVSS…GYLI), 75–95 (YLAS…VGFW), 102–122 (FIAG…LMCS), 131–151 (LLAA…LLVS), 157–177 (LLHV…PLLF), 204–224 (LGVN…GLMP), 231–251 (GMAN…GILG), 270–290 (VQVF…AMAP), 291–311 (ALFI…AWAC), 325–345 (ALLL…AMLM), and 349–369 (SDNL…LMLL).

Belongs to the major facilitator superfamily. YcaD (TC 2.A.1.26) family.

Its subcellular location is the cell inner membrane. This is an uncharacterized protein from Salmonella dublin (strain CT_02021853).